A 543-amino-acid chain; its full sequence is Steroid receptor seven-up, isoforms B/C (543 aa).

Residues proline 38–glutamine 191 form a disordered region. The segment covering alanine 56 to valine 68 has biased composition (low complexity). A compositionally biased stretch (polar residues) spans glutamine 83–glycine 101. Positions glycine 122–proline 141 are enriched in gly residues. The segment covering methionine 158 to glycine 170 has biased composition (polar residues). Positions serine 171–glutamine 191 are enriched in low complexity. The nuclear receptor DNA-binding region spans asparagine 197 to arginine 272. NR C4-type zinc fingers lie at residues cysteine 200–cysteine 220 and cysteine 236–cysteine 260. The NR LBD domain occupies tyrosine 307–glycine 532.

Belongs to the nuclear hormone receptor family. NR2 subfamily. In terms of tissue distribution, expressed in several embryonic tissues; dorsal vessel, oenocyte and fat body. CNS expression is dynamic and confined to temporally restricted subsections of the NB lineage; expressed in many NB and GMCs, but only a small number of neurons.

Its subcellular location is the nucleus. Receptor that is required in photoreceptors R1, R3, R4 and R6 during eye development; generation of the ganglion mother cell-2 (GMC-2) fate in the nb7-3 lineage, coinciding with the transition in the expression of HB to KR in the neuroblasts (NBs). The sequence is that of Steroid receptor seven-up, isoforms B/C (svp) from Drosophila melanogaster (Fruit fly).